Here is a 63-residue protein sequence, read N- to C-terminus: Large ribosomal subunit protein uL29 (63 aa).

The protein belongs to the universal ribosomal protein uL29 family.

The protein is Large ribosomal subunit protein uL29 of Psychromonas ingrahamii (strain DSM 17664 / CCUG 51855 / 37).